The primary structure comprises 203 residues: Phosphatidylethanolamine N-methyltransferase (203 aa).

It carries out the reaction a 1,2-diacyl-sn-glycero-3-phosphoethanolamine + S-adenosyl-L-methionine = a 1,2-diacyl-sn-glycero-3-phospho-N-methylethanolamine + S-adenosyl-L-homocysteine + H(+). It functions in the pathway phospholipid metabolism; phosphatidylcholine biosynthesis. Functionally, this enzyme catalyzes three distinct methylation reactions for converting phosphatidylethanolamine to phosphatidylcholine. The polypeptide is Phosphatidylethanolamine N-methyltransferase (pmtA) (Cereibacter sphaeroides (Rhodobacter sphaeroides)).